The primary structure comprises 405 residues: Protein lin-11 (405 aa).

Glycyl lysine isopeptide (Lys-Gly) (interchain with G-Cter in SUMO) cross-links involve residues K17 and K18. 2 LIM zinc-binding domains span residues 68–124 (CAAC…RRYS) and 127–187 (CAGC…TATK). Residues 189–205 (STPTSIHRPVSNGSECN) are compositionally biased toward polar residues. 2 disordered regions span residues 189-208 (STPTSIHRPVSNGSECNSDV) and 224-246 (GEGDCGKDNSDDSNSAKRRGPRT). Positions 241 to 300 (RRGPRTTIKAKQLETLKNAFAATPKPTRHIREQLAAETGLNMRVIQVWFQNRRSKERRMK) form a DNA-binding region, homeobox.

As to expression, expressed in ADL, AVJL, AIZL, RICL, RIF and AVG neurons.

The protein resides in the nucleus. Probable transcription factor which is required for asymmetric division of vulval blast cells. Involved in olfactory plasticity probably by regulating the expression of transcription factor mbr-1 in RIF neurons. Plays a role in the chemorepulsive response toward ascaroside pheromones mediated by the ADL sensory neurons, probably by regulating E-box motif 5'-CANNTG-3' containing target genes in the ADL neurons. Plays a role in the differentiation of the ADL sensory neurons. This Caenorhabditis elegans protein is Protein lin-11 (lin-11).